Here is a 388-residue protein sequence, read N- to C-terminus: G2/mitotic-specific cyclin-B (388 aa).

This sequence belongs to the cyclin family. Cyclin AB subfamily. As to quaternary structure, interacts with the CDK1 protein kinase to form a serine/threonine kinase holoenzyme complex also known as maturation promoting factor (MPF). The cyclin subunit imparts substrate specificity to the complex.

Essential for the control of the cell cycle at the G2/M (mitosis) transition. This is G2/mitotic-specific cyclin-B from Marthasterias glacialis (Spiny starfish).